The chain runs to 953 residues: 2-oxoglutarate dehydrogenase E1 component (953 aa).

It belongs to the alpha-ketoglutarate dehydrogenase family. In terms of assembly, homodimer. Part of the 2-oxoglutarate dehydrogenase (OGDH) complex composed of E1 (2-oxoglutarate dehydrogenase), E2 (dihydrolipoamide succinyltransferase) and E3 (dihydrolipoamide dehydrogenase); the complex contains multiple copies of the three enzymatic components (E1, E2 and E3). Thiamine diphosphate is required as a cofactor.

The catalysed reaction is N(6)-[(R)-lipoyl]-L-lysyl-[protein] + 2-oxoglutarate + H(+) = N(6)-[(R)-S(8)-succinyldihydrolipoyl]-L-lysyl-[protein] + CO2. E1 component of the 2-oxoglutarate dehydrogenase (OGDH) complex which catalyzes the decarboxylation of 2-oxoglutarate, the first step in the conversion of 2-oxoglutarate to succinyl-CoA and CO(2). This chain is 2-oxoglutarate dehydrogenase E1 component, found in Oceanobacillus iheyensis (strain DSM 14371 / CIP 107618 / JCM 11309 / KCTC 3954 / HTE831).